Reading from the N-terminus, the 647-residue chain is Chaperone protein HtpG (647 aa).

Positions 1 to 353 (MNAHVEQLEF…AQDMSLNVSR (353 aa)) are a; substrate-binding. A b region spans residues 354 to 567 (EILQQDRQIK…AFGMTPALAR (214 aa)). The segment at 568-647 (IYRASGQEVP…LLAERLARTL (80 aa)) is c.

This sequence belongs to the heat shock protein 90 family. In terms of assembly, homodimer.

Its subcellular location is the cytoplasm. Molecular chaperone. Has ATPase activity. This Mycobacterium bovis (strain ATCC BAA-935 / AF2122/97) protein is Chaperone protein HtpG.